The primary structure comprises 545 residues: CTP synthase (545 aa).

The interval 1–266 is amidoligase domain; the sequence is MATNYIFVTG…DDFVCERFRL (266 aa). S14 is a binding site for CTP. Residue S14 coordinates UTP. ATP contacts are provided by residues 15-20 and D72; that span reads SLGKGI. The Mg(2+) site is built by D72 and E140. CTP is bound by residues 147–149, 187–192, and K223; these read DIE and KTKPTQ. Residues 187–192 and K223 each bind UTP; that span reads KTKPTQ. An ATP-binding site is contributed by 239–241; sequence KDV. Positions 291-542 constitute a Glutamine amidotransferase type-1 domain; that stretch reads TIGMVGKYTE…VKAAYENHKK (252 aa). G352 serves as a coordination point for L-glutamine. The active-site Nucleophile; for glutamine hydrolysis is the C379. Residues 380-383, E403, and R470 each bind L-glutamine; that span reads LGMQ. Active-site residues include H515 and E517.

The protein belongs to the CTP synthase family. In terms of assembly, homotetramer.

The enzyme catalyses UTP + L-glutamine + ATP + H2O = CTP + L-glutamate + ADP + phosphate + 2 H(+). It catalyses the reaction L-glutamine + H2O = L-glutamate + NH4(+). It carries out the reaction UTP + NH4(+) + ATP = CTP + ADP + phosphate + 2 H(+). It participates in pyrimidine metabolism; CTP biosynthesis via de novo pathway; CTP from UDP: step 2/2. Its activity is regulated as follows. Allosterically activated by GTP, when glutamine is the substrate; GTP has no effect on the reaction when ammonia is the substrate. The allosteric effector GTP functions by stabilizing the protein conformation that binds the tetrahedral intermediate(s) formed during glutamine hydrolysis. Inhibited by the product CTP, via allosteric rather than competitive inhibition. Its function is as follows. Catalyzes the ATP-dependent amination of UTP to CTP with either L-glutamine or ammonia as the source of nitrogen. Regulates intracellular CTP levels through interactions with the four ribonucleotide triphosphates. The chain is CTP synthase from Haemophilus influenzae (strain ATCC 51907 / DSM 11121 / KW20 / Rd).